The sequence spans 58 residues: Ribulose bisphosphate carboxylase large chain (58 aa).

The propeptide occupies M1 to S2. An N-acetylproline modification is found at P3. K14 carries the N6,N6,N6-trimethyllysine modification.

It belongs to the RuBisCO large chain family. Type I subfamily. As to quaternary structure, heterohexadecamer of 8 large chains and 8 small chains.

It is found in the plastid. The protein localises to the chloroplast. The enzyme catalyses 2 (2R)-3-phosphoglycerate + 2 H(+) = D-ribulose 1,5-bisphosphate + CO2 + H2O. The catalysed reaction is D-ribulose 1,5-bisphosphate + O2 = 2-phosphoglycolate + (2R)-3-phosphoglycerate + 2 H(+). Its function is as follows. RuBisCO catalyzes two reactions: the carboxylation of D-ribulose 1,5-bisphosphate, the primary event in carbon dioxide fixation, as well as the oxidative fragmentation of the pentose substrate in the photorespiration process. Both reactions occur simultaneously and in competition at the same active site. This Euonymus maackii (Maack's spindle tree) protein is Ribulose bisphosphate carboxylase large chain (rbcL).